A 238-amino-acid polypeptide reads, in one-letter code: ATP synthase subunit a (238 aa).

Transmembrane regions (helical) follow at residues 15-35 (IFNL…FVFI), 76-96 (YSLF…LGLM), 111-131 (PTAN…LTHI), 167-187 (LALR…LLLL), and 208-230 (AFSV…VYLG).

The protein belongs to the ATPase A chain family. As to quaternary structure, F-type ATPases have 2 components, CF(1) - the catalytic core - and CF(0) - the membrane proton channel. CF(1) has five subunits: alpha(3), beta(3), gamma(1), delta(1), epsilon(1). CF(0) has three main subunits: a(1), b(2) and c(9-12). The alpha and beta chains form an alternating ring which encloses part of the gamma chain. CF(1) is attached to CF(0) by a central stalk formed by the gamma and epsilon chains, while a peripheral stalk is formed by the delta and b chains.

It is found in the cell membrane. Its function is as follows. Key component of the proton channel; it plays a direct role in the translocation of protons across the membrane. This chain is ATP synthase subunit a, found in Streptococcus pneumoniae serotype 19F (strain G54).